The sequence spans 437 residues: Methylenetetrahydrofolate--tRNA-(uracil-5-)-methyltransferase TrmFO (437 aa).

8 to 13 is a binding site for FAD; that stretch reads GAGLAG.

Belongs to the MnmG family. TrmFO subfamily. Requires FAD as cofactor.

The protein localises to the cytoplasm. The catalysed reaction is uridine(54) in tRNA + (6R)-5,10-methylene-5,6,7,8-tetrahydrofolate + NADH + H(+) = 5-methyluridine(54) in tRNA + (6S)-5,6,7,8-tetrahydrofolate + NAD(+). It catalyses the reaction uridine(54) in tRNA + (6R)-5,10-methylene-5,6,7,8-tetrahydrofolate + NADPH + H(+) = 5-methyluridine(54) in tRNA + (6S)-5,6,7,8-tetrahydrofolate + NADP(+). Catalyzes the folate-dependent formation of 5-methyl-uridine at position 54 (M-5-U54) in all tRNAs. The chain is Methylenetetrahydrofolate--tRNA-(uracil-5-)-methyltransferase TrmFO from Desulfitobacterium hafniense (strain Y51).